The primary structure comprises 440 residues: Chromosome partition protein MukF (440 aa).

Positions 208-236 are leucine-zipper; the sequence is LSETSGTLRELQDTLEAAGDKLQANLLRI.

This sequence belongs to the MukF family. As to quaternary structure, interacts, and probably forms a ternary complex, with MukE and MukB via its C-terminal region. The complex formation is stimulated by calcium or magnesium. It is required for an interaction between MukE and MukB.

It localises to the cytoplasm. It is found in the nucleoid. Functionally, involved in chromosome condensation, segregation and cell cycle progression. May participate in facilitating chromosome segregation by condensation DNA from both sides of a centrally located replisome during cell division. Not required for mini-F plasmid partitioning. Probably acts via its interaction with MukB and MukE. Overexpression results in anucleate cells. It has a calcium binding activity. This is Chromosome partition protein MukF from Escherichia coli O127:H6 (strain E2348/69 / EPEC).